Consider the following 891-residue polypeptide: Kinesin-like protein KIN-UB (891 aa).

The tract at residues 1 to 54 is disordered; it reads MSGKVANATPKAAAGKPRLSAAGGGAYRRTSSGPLPSAGGGGGRASSESGVSSR. Over residues 45-54 the composition is skewed to low complexity; sequence ASSESGVSSR. Residues 54–400 form the Kinesin motor domain; sequence RVRVAVRLRP…IMFGQRAMKV (347 aa). Residue 139–146 participates in ATP binding; the sequence is GQTGTGKT. Residues 370–378 carry the D-BOX motif; the sequence is RTSLVVTIG. A coiled-coil region spans residues 502 to 592; sequence TSSEVGEVQN…ADETRRSLDR (91 aa). Positions 586–595 are enriched in basic and acidic residues; sequence TRRSLDRGDG. The tract at residues 586-626 is disordered; the sequence is TRRSLDRGDGSGKIFPGFDSLMSHSRNSQPREQSNGPKPPI. Positions 607-621 are enriched in polar residues; that stretch reads MSHSRNSQPREQSNG. 4 ARM repeats span residues 623 to 662, 664 to 704, 706 to 746, and 748 to 787; these read KPPI…NLAA, EANQ…NLAM, ETNQ…NLCG, and DKLQ…NFAK.

The protein belongs to the TRAFAC class myosin-kinesin ATPase superfamily. Kinesin family. Ungrouped subfamily.

The protein resides in the cytoplasm. It is found in the cytoskeleton. The chain is Kinesin-like protein KIN-UB from Oryza sativa subsp. japonica (Rice).